The sequence spans 183 residues: ATP synthase subunit b, chloroplastic (183 aa).

A helical transmembrane segment spans residues 33–51; sequence IINLSVVIGVVVSFGGDAL.

Belongs to the ATPase B chain family. F-type ATPases have 2 components, F(1) - the catalytic core - and F(0) - the membrane proton channel. F(1) has five subunits: alpha(3), beta(3), gamma(1), delta(1), epsilon(1). F(0) has four main subunits: a(1), b(1), b'(1) and c(10-14). The alpha and beta chains form an alternating ring which encloses part of the gamma chain. F(1) is attached to F(0) by a central stalk formed by the gamma and epsilon chains, while a peripheral stalk is formed by the delta, b and b' chains.

Its subcellular location is the plastid. The protein localises to the chloroplast thylakoid membrane. Functionally, f(1)F(0) ATP synthase produces ATP from ADP in the presence of a proton or sodium gradient. F-type ATPases consist of two structural domains, F(1) containing the extramembraneous catalytic core and F(0) containing the membrane proton channel, linked together by a central stalk and a peripheral stalk. During catalysis, ATP synthesis in the catalytic domain of F(1) is coupled via a rotary mechanism of the central stalk subunits to proton translocation. Component of the F(0) channel, it forms part of the peripheral stalk, linking F(1) to F(0). This Oltmannsiellopsis viridis (Marine flagellate) protein is ATP synthase subunit b, chloroplastic.